The sequence spans 258 residues: GPI alpha-1,4-mannosyltransferase I, stabilizing subunit (258 aa).

Residues 1–21 (MAARVAAVRAAAWLLLGAATG) form the signal peptide. Residues 22-230 (LTRGPAAAFT…PVGLTVHTSL (209 aa)) lie on the Lumenal side of the membrane. An N-linked (GlcNAc...) asparagine glycan is attached at N103. A helical transmembrane segment spans residues 231 to 251 (VCSVTLLITILCSTLILVAVF). Residues 252 to 258 (KYGHFSL) are Cytoplasmic-facing.

The protein belongs to the PIGX family. In terms of assembly, part of the glycosylphosphatidylinositol-mannosyltransferase I complex that is composed of PIGM and PIGX. Interacts with PIGM; PIGX stabilizes PIGM.

Its subcellular location is the endoplasmic reticulum membrane. Its pathway is glycolipid biosynthesis; glycosylphosphatidylinositol-anchor biosynthesis. Stabilizing subunit of the glycosylphosphatidylinositol-mannosyltransferase I complex which catalyzes the transfer of the first mannose, via an alpha-1,4 bond from a dolichol-phosphate-mannose (Dol-P-Man) to the glucosaminyl acyl phosphatidylinositol (GlcN-(acyl)PI) intermediate to generate alpha-D-Man-(1-&gt;4)-alpha-D-GlcN-(1-&gt;6)-(1-radyl,2-acyl-sn-glycero-3-phospho)-2-acyl-inositol and participates in the sixth step of the glycosylphosphatidylinositol-anchor biosynthesis. Probably acts by stabilizing the mannosyltransferase PIGM. The chain is GPI alpha-1,4-mannosyltransferase I, stabilizing subunit from Homo sapiens (Human).